A 141-amino-acid chain; its full sequence is Putative RING-H2 finger protein ATL62 (141 aa).

The chain crosses the membrane as a helical span at residues 14–32; it reads FFAILTVFYSIFRCCLAYC. The RING-type; degenerate zinc finger occupies 79–121; that stretch reads CVVCLSKFIDEDKARVLPSCNHCFHFDFTDTWLHSDYTCPNCR.

It belongs to the RING-type zinc finger family. ATL subfamily.

It is found in the membrane. The enzyme catalyses S-ubiquitinyl-[E2 ubiquitin-conjugating enzyme]-L-cysteine + [acceptor protein]-L-lysine = [E2 ubiquitin-conjugating enzyme]-L-cysteine + N(6)-ubiquitinyl-[acceptor protein]-L-lysine.. Its pathway is protein modification; protein ubiquitination. This Arabidopsis thaliana (Mouse-ear cress) protein is Putative RING-H2 finger protein ATL62 (ATL62).